The following is a 173-amino-acid chain: Protein tyrosine phosphatase type IVA 3 (173 aa).

Positions 8-161 (APVEVSYKNM…YRPKQRLRFK (154 aa)) constitute a Tyrosine-protein phosphatase domain. An intrachain disulfide couples C49 to C104. Residue D72 is the Proton donor of the active site. The Phosphocysteine intermediate role is filled by C104. R110 provides a ligand contact to substrate. C170 carries the post-translational modification Cysteine methyl ester. A lipid anchor (S-farnesyl cysteine) is attached at C170. The propeptide at 171 to 173 (CIM) is removed in mature form.

This sequence belongs to the protein-tyrosine phosphatase family. Interacts with tubulin. Post-translationally, farnesylated. Farnesylation is required for membrane targeting. Unfarnesylated forms are shifted into the nucleus.

The protein localises to the cell membrane. It localises to the early endosome. It catalyses the reaction O-phospho-L-tyrosyl-[protein] + H2O = L-tyrosyl-[protein] + phosphate. Its activity is regulated as follows. Inhibited by sodium orthovanadate and peroxovanadium compounds, and by pentamidine. In terms of biological role, protein tyrosine phosphatase which stimulates progression from G1 into S phase during mitosis. Enhances cell proliferation, cell motility and invasive activity, and promotes cancer metastasis. May be involved in the progression of cardiac hypertrophy by inhibiting intracellular calcium mobilization in response to angiotensin II. The chain is Protein tyrosine phosphatase type IVA 3 (PTP4A3) from Bos taurus (Bovine).